The chain runs to 136 residues: Large ribosomal subunit protein uL16c (136 aa).

A disordered region spans residues 1-20 (MLSPKRTRFRKQHRGRMKGK).

Belongs to the universal ribosomal protein uL16 family. As to quaternary structure, part of the 50S ribosomal subunit.

The protein resides in the plastid. It is found in the chloroplast. This chain is Large ribosomal subunit protein uL16c, found in Agrostis stolonifera (Creeping bentgrass).